The sequence spans 68 residues: Large ribosomal subunit protein uL29 (68 aa).

It belongs to the universal ribosomal protein uL29 family.

This is Large ribosomal subunit protein uL29 from Methanobrevibacter smithii (strain ATCC 35061 / DSM 861 / OCM 144 / PS).